Consider the following 210-residue polypeptide: GTP pyrophosphokinase YwaC (210 aa).

The protein belongs to the RelA/SpoT family. In terms of assembly, homotetramer.

The catalysed reaction is GTP + ATP = guanosine 3'-diphosphate 5'-triphosphate + AMP. It functions in the pathway purine metabolism; ppGpp biosynthesis; ppGpp from GTP: step 1/2. Functionally, functions as a (p)ppGpp synthase; GDP can be used instead of GTP, resulting in an increase of (p)ppGpp synthesis. Overexpression in relA mutants (triple relA-yjbM-ywaC deletions and single relA deletions) leads to growth arrest; GTP levels fall drastically, various guanine-related nucleotides are synthesized (ppGp or pGpp), the cellular transcriptional profile changes dramatically and 70S ribosome dimerization occurs. Overexpression in the presence of a wild-type relA gene does not have these effects. In eubacteria ppGpp (guanosine 3'-diphosphate 5'-diphosphate) is a mediator of the stringent response that coordinates a variety of cellular activities in response to changes in nutritional abundance. activities in response to changes in nutritional abundance. YwaC has probably a minor role in stringent response. This Bacillus subtilis (strain 168) protein is GTP pyrophosphokinase YwaC (ywaC).